The sequence spans 1055 residues: Cellulose synthase A catalytic subunit 9 [UDP-forming] (1055 aa).

Residues 1-268 (MEASAGLVAG…ASSKVNPYRM (268 aa)) lie on the Cytoplasmic side of the membrane. Zn(2+)-binding residues include Cys37, Cys40, Cys56, Cys59, Cys64, Cys67, Cys79, and Cys82. Residues 37 to 83 (CEICGDEVGRTVDGDLFVACNECGFPVCRPCYEYERREGTQNCPQCK) form an RING-type; degenerate zinc finger. Residues 269–289 (VIILRLVVLGFFLRYRILHPV) traverse the membrane as a helical segment. Residues 290 to 291 (PD) are Extracellular-facing. Residues 292 to 312 (AIPLWLTSIICEIWFAVSWIL) form a helical membrane-spanning segment. Over 313–831 (DQFPKWYPID…LERFSYINTT (519 aa)) the chain is Cytoplasmic. Residues Ser351, Lys357, Glu358, and Asp387 each contribute to the UDP-alpha-D-glucose site. The active site involves Asp387. Residues 439–468 (NFVQERRAMKREYEEFKVRINALVAKAQKV) adopt a coiled-coil conformation. A UDP-alpha-D-glucose-binding site is contributed by Lys528. Mn(2+) contacts are provided by Lys529 and Asp553. Asp753 is an active-site residue. The chain crosses the membrane as a helical span at residues 832–852 (IYPFTSLPLLAYCTLPAVCLL). Over 853–860 (TGKFIMPP) the chain is Extracellular. Residues 861–881 (ISTFASLFFIALFISIFATGI) traverse the membrane as a helical segment. Residues 882–899 (LEMRWSGVSIEEWWRNEQ) lie on the Cytoplasmic side of the membrane. The helical transmembrane segment at 900-920 (FWVIGGVSAHLFAVVQGLLKV) threads the bilayer. The Extracellular segment spans residues 921-951 (LAGIDTNFTVTSKATGDEDDEFAELYAFKWT). N-linked (GlcNAc...) asparagine glycosylation is present at Asn927. Residues 952 to 972 (TLLIPPTTLLILNIIGVVAGV) form a helical membrane-spanning segment. The Cytoplasmic segment spans residues 973–983 (SDAINNGSEAW). The helical transmembrane segment at 984–1004 (GPLFGKLFFAFWVIVHLYPFL) threads the bilayer. Over 1005-1013 (KGLMGRQNR) the chain is Extracellular. A helical transmembrane segment spans residues 1014 to 1034 (TPTIVVIWSVLLASIFSLLWV). The Cytoplasmic portion of the chain corresponds to 1035 to 1055 (RIDPFTIKARGPDVRQCGINC).

Belongs to the glycosyltransferase 2 family. Plant cellulose synthase subfamily. Mn(2+) is required as a cofactor. Zn(2+) serves as cofactor.

The protein resides in the cell membrane. The catalysed reaction is [(1-&gt;4)-beta-D-glucosyl](n) + UDP-alpha-D-glucose = [(1-&gt;4)-beta-D-glucosyl](n+1) + UDP + H(+). The protein operates within glycan metabolism; plant cellulose biosynthesis. Catalytic subunit of cellulose synthase terminal complexes ('rosettes'), required for beta-1,4-glucan microfibril crystallization, a major mechanism of the cell wall formation. Involved in the secondary cell wall formation. This Oryza sativa subsp. indica (Rice) protein is Cellulose synthase A catalytic subunit 9 [UDP-forming] (CESA9).